Reading from the N-terminus, the 853-residue chain is Eukaryotic translation initiation factor 3 subunit C (853 aa).

A disordered region spans residues 1–78 (MSRFFAASDS…EDEDQNKVLK (78 aa)). Residues 11 to 46 (SSEESSEEELYSDNEASAQEDSDKDSDDDDSDDDDS) are compositionally biased toward acidic residues. A PCI domain is found at 599-773 (FHMHINLELL…SAIIFRKGVE (175 aa)). Residues 798–853 (TLEQRTQGTANAFERQGGRGGRGGGRGRGGGRGGGVPRGGRNQQFTGGALGRAIQA) form a disordered region. Residues 815-835 (GRGGRGGGRGRGGGRGGGVPR) are compositionally biased toward gly residues.

It belongs to the eIF-3 subunit C family. As to quaternary structure, component of the eukaryotic translation initiation factor 3 (eIF-3) complex.

Its subcellular location is the cytoplasm. Its function is as follows. Component of the eukaryotic translation initiation factor 3 (eIF-3) complex, which is involved in protein synthesis of a specialized repertoire of mRNAs and, together with other initiation factors, stimulates binding of mRNA and methionyl-tRNAi to the 40S ribosome. The eIF-3 complex specifically targets and initiates translation of a subset of mRNAs involved in cell proliferation. This is Eukaryotic translation initiation factor 3 subunit C from Phaeosphaeria nodorum (strain SN15 / ATCC MYA-4574 / FGSC 10173) (Glume blotch fungus).